A 78-amino-acid polypeptide reads, in one-letter code: Acyl carrier protein (78 aa).

The Carrier domain maps to 2–77 (SDIASRVKAI…QAISYIEEAK (76 aa)). The residue at position 37 (Ser-37) is an O-(pantetheine 4'-phosphoryl)serine.

Belongs to the acyl carrier protein (ACP) family. 4'-phosphopantetheine is transferred from CoA to a specific serine of apo-ACP by AcpS. This modification is essential for activity because fatty acids are bound in thioester linkage to the sulfhydryl of the prosthetic group.

The protein localises to the cytoplasm. The protein operates within lipid metabolism; fatty acid biosynthesis. Its function is as follows. Carrier of the growing fatty acid chain in fatty acid biosynthesis. The sequence is that of Acyl carrier protein from Flavobacterium johnsoniae (strain ATCC 17061 / DSM 2064 / JCM 8514 / BCRC 14874 / CCUG 350202 / NBRC 14942 / NCIMB 11054 / UW101) (Cytophaga johnsonae).